The chain runs to 509 residues: Maturase K (509 aa).

The protein belongs to the intron maturase 2 family. MatK subfamily.

It localises to the plastid. The protein localises to the chloroplast. Usually encoded in the trnK tRNA gene intron. Probably assists in splicing its own and other chloroplast group II introns. The chain is Maturase K from Sequoia sempervirens (California redwood).